The sequence spans 271 residues: MATH domain and coiled-coil domain-containing protein At3g27040 (271 aa).

An MATH domain is found at 7-133; that stretch reads DKKFTWVIKN…NGEVKIVAEV (127 aa). Positions 230 to 271 form a coiled coil; it reads KLDWLEKKLKETGKSRLQEIEEDLKDLKVKCADMDALLDFLR.

The chain is MATH domain and coiled-coil domain-containing protein At3g27040 from Arabidopsis thaliana (Mouse-ear cress).